The chain runs to 477 residues: MGQAATHVDANYTLINYTEEVIEDDRDACAVADDPKYPSSFGITLAVPEWEAICTAIVLTLIIISTIVGNILVILSVFTYKPLRIVQNFFIVSLAVADLTVAILVLPLNVAYSILGQWVFGIYVCKMWLTCDIMCCTSSILNLCAIALDRYWAITDPINYAQKRTLERVLLMIGVVWVLSLIISSPPLLGWNDWPDVFEPDTPCRLTSQPGFVIFSSSGSFYIPLVIMTVVYFEIYLATKKRLRDRAKATKISTISSGQNKYNNKDDHHDQDSVSSEANHNEHQGVTRLVSDNEKKKRTRKLTPKKKPKRKYWSKDDKSQNKLIIPILSNENSVTDMGENLENRNTSSESNSKETHEDDLIEVNETVPVKTHHKKPKPNQQSAVYQFIEEKQRISLTRERRAARTLGIIMGVFVVCWLPFFVIYLVIPFCASCCLSNKFINFITWLGYCNSALNPLIYTIFNMDFRRAFKKLLCMKP.

At Met-1–Thr-55 the chain is on the extracellular side. Asn-11 and Asn-16 each carry an N-linked (GlcNAc...) asparagine glycan. Residues Ala-56–Phe-78 form a helical membrane-spanning segment. The Cytoplasmic portion of the chain corresponds to Thr-79 to Asn-88. The helical transmembrane segment at Phe-89–Val-110 threads the bilayer. At Ala-111 to Met-127 the chain is on the extracellular side. Residues Trp-128–Leu-148 form a helical membrane-spanning segment. Residues Asp-149–Arg-168 lie on the Cytoplasmic side of the membrane. The helical transmembrane segment at Val-169–Trp-191 threads the bilayer. Topologically, residues Asn-192–Ser-216 are extracellular. The helical transmembrane segment at Ser-217 to Ala-238 threads the bilayer. Residues Thr-239–Thr-405 are Cytoplasmic-facing. 2 disordered regions span residues Ser-256–Asp-317 and Val-334–Asp-358. Composition is skewed to basic and acidic residues over residues Asn-263–Asp-272 and Asn-279–Lys-295. Positions Lys-296 to Tyr-312 are enriched in basic residues. The chain crosses the membrane as a helical span at residues Leu-406–Ile-427. Residues Pro-428–Phe-439 lie on the Extracellular side of the membrane. The helical transmembrane segment at Ile-440–Ile-460 threads the bilayer. The Cytoplasmic segment spans residues Phe-461–Pro-477.

It belongs to the G-protein coupled receptor 1 family.

It localises to the cell membrane. Receptor for octopamine. Octopamine (OA) is a neurotransmitter, neurohormone, and neuromodulator in invertebrates. The activity of this receptor is mediated by G proteins which activate adenylyl cyclase. The sequence is that of Octopamine receptor from Heliothis virescens (Tobacco budworm moth).